Reading from the N-terminus, the 302-residue chain is Haloalkane dehalogenase (302 aa).

An AB hydrolase-1 domain is found at 48–152 (PILLMHGEPS…VVVSNTGLPI (105 aa)). The Nucleophile role is filled by D123. D249 serves as the catalytic Proton donor. H278 (proton acceptor) is an active-site residue.

This sequence belongs to the haloalkane dehalogenase family. Type 1 subfamily. As to quaternary structure, monomer.

The enzyme catalyses 1-haloalkane + H2O = a halide anion + a primary alcohol + H(+). Functionally, catalyzes hydrolytic cleavage of carbon-halogen bonds in halogenated aliphatic compounds, leading to the formation of the corresponding primary alcohols, halide ions and protons. The polypeptide is Haloalkane dehalogenase (Caulobacter vibrioides (strain ATCC 19089 / CIP 103742 / CB 15) (Caulobacter crescentus)).